The following is a 450-amino-acid chain: UPF0210 protein CPE1497 (450 aa).

It belongs to the UPF0210 family. In terms of assembly, homodimer.

This is UPF0210 protein CPE1497 from Clostridium perfringens (strain 13 / Type A).